A 348-amino-acid polypeptide reads, in one-letter code: Rhodopsin (348 aa).

Met-1 is subject to N-acetylmethionine. Residues 1 to 36 (MNGTEGPNFYVPFSNATGVVRSPFEYPQYYLAEPWQ) are Extracellular-facing. Residues Asn-2 and Asn-15 are each glycosylated (N-linked (GlcNAc...) asparagine). Residues 37-61 (FSMLAAYMFLLIVLGFPINFLTLYV) form a helical membrane-spanning segment. Over 62 to 73 (TVQHKKLRTPLN) the chain is Cytoplasmic. A helical membrane pass occupies residues 74-96 (YILLNLAVADLFMVFGGFTTTLY). Over 97–110 (TSLHGYFVFGPTGC) the chain is Extracellular. A disulfide bridge connects residues Cys-110 and Cys-187. The helical transmembrane segment at 111 to 133 (NLEGFFATLGGEIALWSLVVLAI) threads the bilayer. The short motif at 134–136 (ERY) is the 'Ionic lock' involved in activated form stabilization element. Residues 134–152 (ERYVVICKPMSNFRFGENH) lie on the Cytoplasmic side of the membrane. Residues 153 to 173 (AIMGVVFTWIMALACAAPPLV) traverse the membrane as a helical segment. Topologically, residues 174-202 (GWSRYIPEGMQCSCGVDYYTLKPEVNNES) are extracellular. Glu-201 serves as a coordination point for Zn(2+). A helical transmembrane segment spans residues 203 to 224 (FVIYMFVVHFTIPLIVIFFCYG). Residues 225-252 (QLVFTVKEAAAQQQESATTQKAEKEVTR) lie on the Cytoplasmic side of the membrane. A helical transmembrane segment spans residues 253-274 (MVILMVVFFLICWFPYAGVAFY). Residues 275–286 (IFTHQGSNFGPI) lie on the Extracellular side of the membrane. Gln-279 contributes to the Zn(2+) binding site. A helical transmembrane segment spans residues 287-308 (FMTLPAFFAKSSSIYNPVIYIM). An N6-(retinylidene)lysine modification is found at Lys-296. At 309 to 348 (MNKQFRNCMLTTLCCGKNILGDDEASATASKTETSQVAPA) the chain is on the cytoplasmic side. 2 S-palmitoyl cysteine lipidation sites follow: Cys-322 and Cys-323. Residues 330–348 (DDEASATASKTETSQVAPA) form an interaction with SAG region. A Phosphoserine modification is found at Ser-334. Residue Thr-336 is modified to Phosphothreonine. Ser-338 carries the phosphoserine modification. Phosphothreonine occurs at positions 340 and 342. Ser-343 is subject to Phosphoserine.

This sequence belongs to the G-protein coupled receptor 1 family. Opsin subfamily. Homodimer. May form a complex composed of RHO, GRK1 and RCVRN in a Ca(2+)-dependent manner; RCVRN prevents the interaction between GRK1 and RHO. Interacts with GRK1. Interacts (phosphorylated form) with SAG. Interacts with GNAT1. Interacts with GNAT3. SAG and G-proteins compete for a common binding site. Interacts with PRCD; the interaction promotes PRCD stability. Forms a complex with ASAP1 and ARF4. Forms a complex with ASAP1, RAB11A, Rabin8/RAB3IP, ARF4 and RAB11FIP3; the complex regulates Golgi-to-cilia rhodopsin/RHO transport in photoreceptors. In terms of processing, phosphorylated on some or all of the serine and threonine residues present in the C-terminal region. Contains one covalently linked retinal chromophore. Upon light absorption, the covalently bound 11-cis-retinal is converted to all-trans-retinal. After hydrolysis of the Schiff base and release of the covalently bound all-trans-retinal, active rhodopsin is regenerated by binding of a fresh molecule of 11-cis-retinal.

Its subcellular location is the membrane. It localises to the cell projection. It is found in the cilium. The protein localises to the photoreceptor outer segment. Photoreceptor required for image-forming vision at low light intensity. Required for photoreceptor cell viability after birth. Light-induced isomerization of 11-cis to all-trans retinal triggers a conformational change that activates signaling via G-proteins. Subsequent receptor phosphorylation mediates displacement of the bound G-protein alpha subunit by the arrestin SAG and terminates signaling. The chain is Rhodopsin (RHO) from Cricetulus griseus (Chinese hamster).